We begin with the raw amino-acid sequence, 237 residues long: Ras modification protein ERF4 (237 aa).

Belongs to the ERF4 family. As to quaternary structure, interacts with ERF2.

It is found in the endoplasmic reticulum membrane. Its function is as follows. The ERF2-SHR5 complex is a palmitoyltransferase specific for Ras proteins. Palmitoylates RAS2, which is required for its proper plasma membrane localization. This chain is Ras modification protein ERF4 (SHR5), found in Saccharomyces cerevisiae (strain ATCC 204508 / S288c) (Baker's yeast).